Consider the following 76-residue polypeptide: UPF0729 protein C18orf32 (76 aa).

The segment at 1–37 (MVCIPCIVIPVLLWIYKKFLEPYIYPLVSPFVSRIWP) is necessary for its localzation to the endoplasmic reticulum and lipid droplets. The interval 46–76 (DTNKGKVNFKGADMNGLPTKGPTEICDKKKD) is disordered.

It belongs to the UPF0729 family. Interacts with DERL1 and AMFR. In terms of processing, undergoes ER-associated degradation (ERAD).

It localises to the endoplasmic reticulum. Its subcellular location is the lipid droplet. Functionally, may activate the NF-kappa-B signaling pathway. This Homo sapiens (Human) protein is UPF0729 protein C18orf32 (C18orf32).